Here is a 278-residue protein sequence, read N- to C-terminus: Small ribosomal subunit protein uS2 (278 aa).

The tract at residues 233 to 257 (IDMEAAGEAPANKGKKKSVKARLDK) is disordered.

It belongs to the universal ribosomal protein uS2 family.

The chain is Small ribosomal subunit protein uS2 from Bacteroides thetaiotaomicron (strain ATCC 29148 / DSM 2079 / JCM 5827 / CCUG 10774 / NCTC 10582 / VPI-5482 / E50).